The sequence spans 414 residues: Serine/threonine transporter SstT (414 aa).

Over 2–15 (TTQRSPGLFRRLAH) the chain is Cytoplasmic. A helical membrane pass occupies residues 16–36 (GSLVKQILVGLVLGILLAWIS). The Periplasmic segment spans residues 37 to 45 (KPAAEAVGL). Residues 46–66 (LGTLFVGALKAVAPILVLMLV) form a helical membrane-spanning segment. Residues 67–83 (MASIANHQHGQKTNIRP) lie on the Cytoplasmic side of the membrane. A helical membrane pass occupies residues 84–104 (ILFLYLLGTFSAALAAVVFSF). Over 105-142 (AFPSTLHLSSSAGDISPPSGIVEVMRGLVMSMVSNPID) the chain is Periplasmic. A helical transmembrane segment spans residues 143-163 (ALLKGNYIGILVWAIGLGFAL). The Cytoplasmic segment spans residues 164–179 (RHGNETTKNLVNDMSN). The chain crosses the membrane as a helical span at residues 180–200 (AVTFMVKLVIRFAPFGIFGLV). Residues 201–217 (SSTLATTGFSTLWGYAQ) lie on the Periplasmic side of the membrane. Residues 218–238 (LLVVLVGCMLLVALVVNPLLV) traverse the membrane as a helical segment. The Cytoplasmic segment spans residues 239-299 (WWKIRRNPFP…VSIPLGATIN (61 aa)). Residues 300 to 320 (MAGAAITITVLTLAAVNTLGI) form a helical membrane-spanning segment. Topologically, residues 321 to 331 (PVDLPTALLLS) are periplasmic. A helical membrane pass occupies residues 332 to 352 (VVASLCACGASGVAGGSLLLI). Topologically, residues 353 to 414 (PLACNMFGIS…DRLANSALRN (62 aa)) are cytoplasmic.

It belongs to the dicarboxylate/amino acid:cation symporter (DAACS) (TC 2.A.23) family.

Its subcellular location is the cell inner membrane. The catalysed reaction is L-serine(in) + Na(+)(in) = L-serine(out) + Na(+)(out). It catalyses the reaction L-threonine(in) + Na(+)(in) = L-threonine(out) + Na(+)(out). Involved in the import of serine and threonine into the cell, with the concomitant import of sodium (symport system). In Shigella flexneri, this protein is Serine/threonine transporter SstT.